The chain runs to 296 residues: GTPase Era (296 aa).

The Era-type G domain maps to 3 to 170 (KSGFVTIVGR…KELMFKYIPE (168 aa)). Positions 11–18 (GRPNVGKS) are G1. 11 to 18 (GRPNVGKS) contacts GTP. Residues 37–41 (QTTRN) form a G2 region. Positions 58-61 (DTPG) are G3. GTP-binding positions include 58–62 (DTPGI) and 120–123 (NKID). Positions 120-123 (NKID) are G4. The interval 149 to 151 (ISA) is G5. One can recognise a KH type-2 domain in the interval 201 to 278 (LSEEVPHGIA…YIRLWVKVKE (78 aa)).

The protein belongs to the TRAFAC class TrmE-Era-EngA-EngB-Septin-like GTPase superfamily. Era GTPase family. As to quaternary structure, monomer.

It localises to the cytoplasm. It is found in the cell membrane. Functionally, an essential GTPase that binds both GDP and GTP, with rapid nucleotide exchange. Plays a role in 16S rRNA processing and 30S ribosomal subunit biogenesis and possibly also in cell cycle regulation and energy metabolism. This chain is GTPase Era, found in Clostridium botulinum (strain 657 / Type Ba4).